A 722-amino-acid chain; its full sequence is MDGSQGSTDYGDHVVLRYGGTREMVPLIRHEQMLDMLMERARQIVQGFGNLDTRNMYLFRHEYNSPTLLYPITSASQITSGSILEIILVDRTEAAVIPHVVEPESYMRPTFCDFCGEMLTGLMRQGVKCKNCNGNFHKRCSNAARNNCGAPGAPGAQPSRPPILPPIPTTPTGFPVAALSTPTGLPHTLIEHSYRQFTVCKVCDHLLVGLVKQGLKCRDCGVNVHRKCAMELASNCVLSENAISRVNFTDPEGPGSSSSDNIPLFRLPGQVGTRATEKKKLEGWMMHFILSDPERRLKHYWMMQSNAIHLYNEYSEGIGVNPNRVYRIIPLAEITSVVQNNGKSVLAKHPPHCFEIRTTTNTVFCVGEDYHAFSGGPPKKIPRSMSVRPSSNTTMWFQFIKESLQPPSRNEDNAEQALEFANLYQVLSDKTLGSGQFGTVYSAIQRHSGKEVAVKVISKERFSKKGSGAESMRAEVAILQQTCHPGIVCLEFMCETKDKIFVVMEKMNGDMLEMILSQELGRLNSRATKFLLVQILCALKYLHDQGIAHCDLKPENVLLSDMGSNFPQTKICDFGYARFIPESQFRKTVVGTPAYLPPEVLQRKGYNKSLDMWSVGVIIYVTLSGTFPFNEGEEISEQIQNASFMFPTEPWSEVEPLAVDLIQKLLKVEIEARMSIEQCLDHGWLKGEQLYRDLRDLEVRLNTPRYLTSPQDDILYGTLVNP.

2 Phorbol-ester/DAG-type zinc fingers span residues 98-148 (PHVV…RNNC) and 186-236 (PHTL…ASNC). The 129-residue stretch at 279–407 (KKLEGWMMHF…QFIKESLQPP (129 aa)) folds into the PH domain. Residues 426 to 685 (VLSDKTLGSG…IEQCLDHGWL (260 aa)) form the Protein kinase domain. ATP-binding positions include 432–440 (LGSGQFGTV) and lysine 455. Aspartate 551 (proton acceptor) is an active-site residue. Threonine 588 is subject to Phosphothreonine.

Belongs to the protein kinase superfamily. CAMK Ser/Thr protein kinase family. PKD subfamily. Mg(2+) is required as a cofactor. Prolonged phosphorylation at Thr-588 results in ubiquitination and degradation. As to expression, highly expressed in embryos and at lower levels through the four larval stages in adults. Present in a region bounded by the anterior and posterior bulbs of the pharynx and an area of the tail containing the lumbar, dorsorectal and pre-anal ganglia. Expressed in neurons.

It localises to the cytoplasm. The protein localises to the membrane. The enzyme catalyses L-seryl-[protein] + ATP = O-phospho-L-seryl-[protein] + ADP + H(+). It catalyses the reaction L-threonyl-[protein] + ATP = O-phospho-L-threonyl-[protein] + ADP + H(+). Its activity is regulated as follows. Activated by DAG and phorbol esters. Phorbol-ester/DAG-type domain 1 binds phorbol ester with high affinity and mediates accumulation at the cell periphery. Phorbol-ester/DAG-type domain 2 binds phorbol ester with low affinity but may mediate initial contact, resulting in a conformational change allowing previously occluded domain 1 to anchor the kinase. Phosphorylation on Thr-588 is then also required for activation and may also result in a further conformational change. In terms of biological role, converts transient diacylglycerol (DAG) signals into prolonged physiological effects, independently of PKC. Role in the regulation of growth and neuromuscular control of movement. Involved in immune response to S.aureus bacterium by activating transcription factor hlh-30 downstream of phospholipase plc-1. In Caenorhabditis elegans, this protein is Serine/threonine-protein kinase dkf-1 (dkf-1).